The primary structure comprises 346 residues: Probable dual-specificity RNA methyltransferase RlmN (346 aa).

Glutamate 76 functions as the Proton acceptor in the catalytic mechanism. Residues 97–329 (SYDRATICVS…TFIRKPRGRD (233 aa)) enclose the Radical SAM core domain. Cysteine 104 and cysteine 334 form a disulfide bridge. [4Fe-4S] cluster is bound by residues cysteine 111, cysteine 115, and cysteine 118. Residues 162–163 (GE), serine 192, 215–217 (SLN), and asparagine 291 each bind S-adenosyl-L-methionine. The S-methylcysteine intermediate role is filled by cysteine 334.

The protein belongs to the radical SAM superfamily. RlmN family. [4Fe-4S] cluster is required as a cofactor.

The protein resides in the cytoplasm. The catalysed reaction is adenosine(2503) in 23S rRNA + 2 reduced [2Fe-2S]-[ferredoxin] + 2 S-adenosyl-L-methionine = 2-methyladenosine(2503) in 23S rRNA + 5'-deoxyadenosine + L-methionine + 2 oxidized [2Fe-2S]-[ferredoxin] + S-adenosyl-L-homocysteine. It catalyses the reaction adenosine(37) in tRNA + 2 reduced [2Fe-2S]-[ferredoxin] + 2 S-adenosyl-L-methionine = 2-methyladenosine(37) in tRNA + 5'-deoxyadenosine + L-methionine + 2 oxidized [2Fe-2S]-[ferredoxin] + S-adenosyl-L-homocysteine. Functionally, specifically methylates position 2 of adenine 2503 in 23S rRNA and position 2 of adenine 37 in tRNAs. The protein is Probable dual-specificity RNA methyltransferase RlmN of Koribacter versatilis (strain Ellin345).